The sequence spans 311 residues: Cytochrome f (311 aa).

A signal peptide spans 1 to 27; it reads MKHFFKSLTLAIALAASVLFWSPQAQA. Heme-binding residues include Tyr-28, Cys-48, Cys-51, and His-52. The chain crosses the membrane as a helical span at residues 279–296; sequence WLLVFFAAITLSQILLVL.

The protein belongs to the cytochrome f family. As to quaternary structure, the 4 large subunits of the cytochrome b6-f complex are cytochrome b6, subunit IV (17 kDa polypeptide, PetD), cytochrome f and the Rieske protein, while the 4 small subunits are PetG, PetL, PetM and PetN. The complex functions as a dimer. Requires heme as cofactor.

Its subcellular location is the cellular thylakoid membrane. Its function is as follows. Component of the cytochrome b6-f complex, which mediates electron transfer between photosystem II (PSII) and photosystem I (PSI), cyclic electron flow around PSI, and state transitions. The chain is Cytochrome f from Synechococcus elongatus.